The chain runs to 126 residues: SPbeta prophage-derived uncharacterized protein YorC (126 aa).

This is SPbeta prophage-derived uncharacterized protein YorC (yorC) from Bacillus subtilis (strain 168).